Here is a 648-residue protein sequence, read N- to C-terminus: Probable potassium transport system protein Kup 1 (648 aa).

Helical transmembrane passes span 25 to 45 (LTLG…IYAF), 57 to 77 (IVAG…ILVV), 113 to 133 (LVMA…VITP), 153 to 173 (SVSR…LFLM), 184 to 204 (LFGP…LIHI), 219 to 239 (GVLF…AVFL), 263 to 283 (WLAI…AFAL), 312 to 332 (IPLV…VITG), 362 to 382 (IYLP…VLGF), 391 to 411 (AYGV…FLVV), 417 to 437 (WGWP…LFFF), and 446 to 466 (EGGW…VTWV).

It belongs to the HAK/KUP transporter (TC 2.A.72) family.

The protein localises to the cell inner membrane. It catalyses the reaction K(+)(in) + H(+)(in) = K(+)(out) + H(+)(out). Functionally, transport of potassium into the cell. Likely operates as a K(+):H(+) symporter. This is Probable potassium transport system protein Kup 1 from Rhizorhabdus wittichii (strain DSM 6014 / CCUG 31198 / JCM 15750 / NBRC 105917 / EY 4224 / RW1) (Sphingomonas wittichii).